The sequence spans 515 residues: E3 ubiquitin-protein ligase RNF38 (515 aa).

The Bipartite nuclear localization signal 1 motif lies at 57–71 (DSPSPKRQRLSHSVF). Residues 73–141 (YTSASPAPSP…LSRHNSISQD (69 aa)) are disordered. The span at 89–104 (MTSNRQPPSVRPSQHH) shows a compositional bias: polar residues. The short motif at 115 to 131 (RNRRSPPVRRQRGRRDR) is the Bipartite nuclear localization signal 2 element. Positions 115–134 (RNRRSPPVRRQRGRRDRLSR) are enriched in basic residues. An RING-type zinc finger spans residues 463–504 (CVVCMCDFESRQLLRVLPCNHEFHAKCVDKWLKANRTCPICR).

Widely expressed with highest levels in testis.

The protein resides in the nucleus. The catalysed reaction is S-ubiquitinyl-[E2 ubiquitin-conjugating enzyme]-L-cysteine + [acceptor protein]-L-lysine = [E2 ubiquitin-conjugating enzyme]-L-cysteine + N(6)-ubiquitinyl-[acceptor protein]-L-lysine.. Its pathway is protein modification; protein ubiquitination. Functionally, acts as an E3 ubiquitin-protein ligase able to ubiquitinate p53/TP53 which promotes its relocalization to discrete foci associated with PML nuclear bodies. Exhibits preference for UBE2D2 as a E2 enzyme. This Homo sapiens (Human) protein is E3 ubiquitin-protein ligase RNF38.